We begin with the raw amino-acid sequence, 253 residues long: 5'/3'-nucleotidase SurE (253 aa).

A divalent metal cation contacts are provided by Asp8, Asp9, Ser39, and Asn92.

Belongs to the SurE nucleotidase family. A divalent metal cation serves as cofactor.

The protein localises to the cytoplasm. It catalyses the reaction a ribonucleoside 5'-phosphate + H2O = a ribonucleoside + phosphate. The enzyme catalyses a ribonucleoside 3'-phosphate + H2O = a ribonucleoside + phosphate. It carries out the reaction [phosphate](n) + H2O = [phosphate](n-1) + phosphate + H(+). Nucleotidase with a broad substrate specificity as it can dephosphorylate various ribo- and deoxyribonucleoside 5'-monophosphates and ribonucleoside 3'-monophosphates with highest affinity to 3'-AMP. Also hydrolyzes polyphosphate (exopolyphosphatase activity) with the preference for short-chain-length substrates (P20-25). Might be involved in the regulation of dNTP and NTP pools, and in the turnover of 3'-mononucleotides produced by numerous intracellular RNases (T1, T2, and F) during the degradation of various RNAs. The polypeptide is 5'/3'-nucleotidase SurE (Escherichia coli O127:H6 (strain E2348/69 / EPEC)).